Reading from the N-terminus, the 427-residue chain is Glutamate-1-semialdehyde 2,1-aminomutase (427 aa).

The residue at position 266 (K266) is an N6-(pyridoxal phosphate)lysine.

Belongs to the class-III pyridoxal-phosphate-dependent aminotransferase family. HemL subfamily. As to quaternary structure, homodimer. The cofactor is pyridoxal 5'-phosphate.

The protein localises to the cytoplasm. It carries out the reaction (S)-4-amino-5-oxopentanoate = 5-aminolevulinate. The protein operates within porphyrin-containing compound metabolism; protoporphyrin-IX biosynthesis; 5-aminolevulinate from L-glutamyl-tRNA(Glu): step 2/2. The chain is Glutamate-1-semialdehyde 2,1-aminomutase from Dechloromonas aromatica (strain RCB).